Reading from the N-terminus, the 196-residue chain is Pyridoxal 5'-phosphate synthase subunit PdxT (196 aa).

52–54 (GES) provides a ligand contact to L-glutamine. The active-site Nucleophile is the Cys84. Residues Arg113 and 141–142 (IR) each bind L-glutamine. Catalysis depends on charge relay system residues His178 and Glu180.

Belongs to the glutaminase PdxT/SNO family. In terms of assembly, in the presence of PdxS, forms a dodecamer of heterodimers. Only shows activity in the heterodimer.

The catalysed reaction is aldehydo-D-ribose 5-phosphate + D-glyceraldehyde 3-phosphate + L-glutamine = pyridoxal 5'-phosphate + L-glutamate + phosphate + 3 H2O + H(+). It catalyses the reaction L-glutamine + H2O = L-glutamate + NH4(+). Its pathway is cofactor biosynthesis; pyridoxal 5'-phosphate biosynthesis. Functionally, catalyzes the hydrolysis of glutamine to glutamate and ammonia as part of the biosynthesis of pyridoxal 5'-phosphate. The resulting ammonia molecule is channeled to the active site of PdxS. This is Pyridoxal 5'-phosphate synthase subunit PdxT from Pyrococcus abyssi (strain GE5 / Orsay).